Reading from the N-terminus, the 120-residue chain is NAD(P)H-quinone oxidoreductase subunit 3, chloroplastic (120 aa).

The next 3 membrane-spanning stretches (helical) occupy residues 9 to 29 (IFWA…LISG), 64 to 84 (MFAL…PWAM), and 88 to 108 (VLGV…IVGL).

It belongs to the complex I subunit 3 family. NDH is composed of at least 16 different subunits, 5 of which are encoded in the nucleus.

Its subcellular location is the plastid. It localises to the chloroplast thylakoid membrane. The enzyme catalyses a plastoquinone + NADH + (n+1) H(+)(in) = a plastoquinol + NAD(+) + n H(+)(out). It carries out the reaction a plastoquinone + NADPH + (n+1) H(+)(in) = a plastoquinol + NADP(+) + n H(+)(out). NDH shuttles electrons from NAD(P)H:plastoquinone, via FMN and iron-sulfur (Fe-S) centers, to quinones in the photosynthetic chain and possibly in a chloroplast respiratory chain. The immediate electron acceptor for the enzyme in this species is believed to be plastoquinone. Couples the redox reaction to proton translocation, and thus conserves the redox energy in a proton gradient. The protein is NAD(P)H-quinone oxidoreductase subunit 3, chloroplastic of Lupinus luteus (European yellow lupine).